A 340-amino-acid polypeptide reads, in one-letter code: S-adenosylmethionine:tRNA ribosyltransferase-isomerase (340 aa).

This sequence belongs to the QueA family. Monomer.

The protein resides in the cytoplasm. The catalysed reaction is 7-aminomethyl-7-carbaguanosine(34) in tRNA + S-adenosyl-L-methionine = epoxyqueuosine(34) in tRNA + adenine + L-methionine + 2 H(+). Its pathway is tRNA modification; tRNA-queuosine biosynthesis. Transfers and isomerizes the ribose moiety from AdoMet to the 7-aminomethyl group of 7-deazaguanine (preQ1-tRNA) to give epoxyqueuosine (oQ-tRNA). The polypeptide is S-adenosylmethionine:tRNA ribosyltransferase-isomerase (Vesicomyosocius okutanii subsp. Calyptogena okutanii (strain HA)).